A 170-amino-acid chain; its full sequence is uncharacterized protein (170 aa).

Positions 1–148 (MVKSQKVIDV…TIHDFFENAT (148 aa)) constitute a Ferritin-like diiron domain.

This is an uncharacterized protein from Ureaplasma parvum serovar 3 (strain ATCC 700970).